A 328-amino-acid polypeptide reads, in one-letter code: MSEKIRVLLYYKYVSIENAEEYAAKHLEFCKSIGLKGRILIADEGINGTVSGDYETTQKYMDWVHSDERFADLWFKIDEENQQAFRKMFVRYKKEIVHLGLEDNNFDSDINPLETTGEYLNPKQFKEALLDEDTVVLDTRNDYEYDLGHFRGAIRPDIRNFRELPQWVRDNKDKFMEKRVVVYCTGGVRCEKFSGWMVREGFKDVGQLHGGIATYGKDPEVQGELWDGAMYVFDDRISVPINHVNPTVISKDYFDGTPCERYVNCANPFCNKQIFASEENEAKYVRGCSPECRAHERNRYVQENGLSRQEWAERLEAIGESLPQVANV.

Residues 130–224 enclose the Rhodanese domain; sequence LDEDTVVLDT…YGKDPEVQGE (95 aa). Residue C184 is the Cysteine persulfide intermediate of the active site.

It belongs to the TrhO family.

The catalysed reaction is uridine(34) in tRNA + AH2 + O2 = 5-hydroxyuridine(34) in tRNA + A + H2O. In terms of biological role, catalyzes oxygen-dependent 5-hydroxyuridine (ho5U) modification at position 34 in tRNAs. This is tRNA uridine(34) hydroxylase from Streptococcus agalactiae serotype Ia (strain ATCC 27591 / A909 / CDC SS700).